A 206-amino-acid polypeptide reads, in one-letter code: Small ribosomal subunit protein uS4 (206 aa).

In terms of domain architecture, S4 RNA-binding spans 96 to 156 (SRLDNVVYRM…EKSKNQLRIQ (61 aa)).

Belongs to the universal ribosomal protein uS4 family. As to quaternary structure, part of the 30S ribosomal subunit. Contacts protein S5. The interaction surface between S4 and S5 is involved in control of translational fidelity.

Functionally, one of the primary rRNA binding proteins, it binds directly to 16S rRNA where it nucleates assembly of the body of the 30S subunit. Its function is as follows. With S5 and S12 plays an important role in translational accuracy. The sequence is that of Small ribosomal subunit protein uS4 from Teredinibacter turnerae (strain ATCC 39867 / T7901).